A 160-amino-acid chain; its full sequence is Transcription elongation factor GreA (160 aa).

Residues Leu43–Ile75 are a coiled coil.

The protein belongs to the GreA/GreB family.

Its function is as follows. Necessary for efficient RNA polymerase transcription elongation past template-encoded arresting sites. The arresting sites in DNA have the property of trapping a certain fraction of elongating RNA polymerases that pass through, resulting in locked ternary complexes. Cleavage of the nascent transcript by cleavage factors such as GreA or GreB allows the resumption of elongation from the new 3'terminus. GreA releases sequences of 2 to 3 nucleotides. In Prosthecochloris aestuarii (strain DSM 271 / SK 413), this protein is Transcription elongation factor GreA.